Reading from the N-terminus, the 518-residue chain is Calcium/calmodulin-dependent protein kinase kinase cmkC (518 aa).

A disordered region spans residues 1–72 (MANEGAGSLQ…SEYTLSQDDG (72 aa)). Composition is skewed to polar residues over residues 8 to 17 (SLQQDASPGS) and 60 to 71 (NARSEYTLSQDD). The 296-residue stretch at 81–376 (YVIKQEIGRG…MDELREHPWV (296 aa)) folds into the Protein kinase domain. Residues 87–95 (IGRGSFGAV) and Lys109 contribute to the ATP site. Positions 119–149 (RAKSQLLRQSRGPKRSSRWPKLPFSSPGTGT) are disordered. Asp243 acts as the Proton acceptor in catalysis. Residues 404–409 (FSAITK) form an autoinhibitory domain region. Residues 407–431 (ITKNFGHVLAVMKAAKKFKSLQGPT) form a calmodulin-binding region. Positions 453–472 (PTQMDPEESVSLPSPLPYKK) are disordered.

Belongs to the protein kinase superfamily. Ser/Thr protein kinase family.

The enzyme catalyses L-seryl-[protein] + ATP = O-phospho-L-seryl-[protein] + ADP + H(+). The catalysed reaction is L-threonyl-[protein] + ATP = O-phospho-L-threonyl-[protein] + ADP + H(+). Its activity is regulated as follows. Activated by Ca(2+)/calmodulin. Binding of calmodulin may relieve intrasteric autoinhibition. Calcium/calmodulin-dependent protein kinase that operates in the calcium-triggered CaMKK-CaMK1 signaling cascade. Phosphorylates and activates cmkB in vitro. Required in G1-phase of the cell cycle for proper timing of the initial nuclear division after germination as well as for subsequent nuclear division cycles. Required for the normal temporal regulation of nimX activity. The protein is Calcium/calmodulin-dependent protein kinase kinase cmkC of Emericella nidulans (Aspergillus nidulans).